The chain runs to 316 residues: Cytochrome c biogenesis protein CcsA (316 aa).

8 consecutive transmembrane segments (helical) span residues valine 19 to tryptophan 39, serine 47 to phenylalanine 67, isoleucine 77 to leucine 97, leucine 106 to leucine 126, valine 151 to leucine 171, threonine 224 to asparagine 244, threonine 258 to leucine 275, and alanine 285 to leucine 305.

This sequence belongs to the CcmF/CycK/Ccl1/NrfE/CcsA family. In terms of assembly, may interact with ccs1.

The protein resides in the cellular thylakoid membrane. Its function is as follows. Required during biogenesis of c-type cytochromes (cytochrome c6 and cytochrome f) at the step of heme attachment. In Prochlorococcus marinus (strain SARG / CCMP1375 / SS120), this protein is Cytochrome c biogenesis protein CcsA.